A 224-amino-acid chain; its full sequence is Phosphoribosyltransferase domain-containing protein 1 (224 aa).

E140 and D141 together coordinate Mg(2+). GMP-binding positions include E140 to T148, K172, F193 to V194, and D200. D200 lines the Mg(2+) pocket.

This sequence belongs to the purine/pyrimidine phosphoribosyltransferase family.

In Xenopus laevis (African clawed frog), this protein is Phosphoribosyltransferase domain-containing protein 1 (prtfdc1).